The sequence spans 355 residues: Sorbitol dehydrogenase (355 aa).

At alanine 2 the chain carries N-acetylalanine. Residue cysteine 43 participates in Zn(2+) binding. Tyrosine 49 contacts substrate. Zn(2+) contacts are provided by histidine 68 and glutamate 69. Glutamate 154 provides a ligand contact to substrate. Residues isoleucine 182, aspartate 202, arginine 207, 271-273 (VGL), and 295-297 (IFR) each bind NAD(+). Positions 297 and 298 each coordinate substrate.

It belongs to the zinc-containing alcohol dehydrogenase family. As to quaternary structure, homotetramer. Requires Zn(2+) as cofactor. As to expression, expressed in liver.

Its subcellular location is the mitochondrion membrane. The protein resides in the cell projection. The protein localises to the cilium. It is found in the flagellum. The catalysed reaction is keto-D-fructose + NADH + H(+) = D-sorbitol + NAD(+). In terms of biological role, polyol dehydrogenase that catalyzes the reversible NAD(+)-dependent oxidation of various sugar alcohols. Is active with D-sorbitol (D-glucitol) as substrate, leading to the C2-oxidized product D-fructose. Is a key enzyme in the polyol pathway that interconverts glucose and fructose via sorbitol, which constitutes an important alternate route for glucose metabolism. This Gallus gallus (Chicken) protein is Sorbitol dehydrogenase (SORD).